Consider the following 609-residue polypeptide: Protein NRT1/ PTR FAMILY 7.1 (609 aa).

2 helical membrane passes run Ile67 to Leu87 and Trp109 to Gly129. Thr133 carries the phosphothreonine modification. Transmembrane regions (helical) follow at residues Ile136 to Leu156, Ser173 to Gly193, Phe216 to Val236, Leu243 to Leu263, Pro367 to Val387, Ile402 to Tyr422, Met438 to Gln458, Ile474 to Gly494, Met516 to Ile536, and Phe559 to Lys579.

The protein belongs to the major facilitator superfamily. Proton-dependent oligopeptide transporter (POT/PTR) (TC 2.A.17) family. Expressed in flowers.

It is found in the membrane. The polypeptide is Protein NRT1/ PTR FAMILY 7.1 (NPF7.1) (Arabidopsis thaliana (Mouse-ear cress)).